A 396-amino-acid chain; its full sequence is Elongation factor Tu (396 aa).

One can recognise a tr-type G domain in the interval K10 to E206. The segment at G19–T26 is G1. GTP is bound at residue G19–T26. T26 is a Mg(2+) binding site. The segment at G60–S64 is G2. Positions D81 to G84 are G3. Residues D81–H85 and N136–D139 contribute to the GTP site. Residues N136–D139 form a G4 region. The interval S174–L176 is G5.

The protein belongs to the TRAFAC class translation factor GTPase superfamily. Classic translation factor GTPase family. EF-Tu/EF-1A subfamily. In terms of assembly, monomer.

The protein localises to the cytoplasm. It catalyses the reaction GTP + H2O = GDP + phosphate + H(+). In terms of biological role, GTP hydrolase that promotes the GTP-dependent binding of aminoacyl-tRNA to the A-site of ribosomes during protein biosynthesis. The polypeptide is Elongation factor Tu (Rhodopseudomonas palustris (strain HaA2)).